Reading from the N-terminus, the 183-residue chain is Small ribosomal subunit protein uS4 (183 aa).

One can recognise an S4 RNA-binding domain in the interval 106-168 (RRLETLVYKK…ETSPFTDENH (63 aa)). Residues 158–183 (NETSPFTDENHPLRMEMSGTKEEENE) are disordered. Residues 165-183 (DENHPLRMEMSGTKEEENE) show a composition bias toward basic and acidic residues.

It belongs to the universal ribosomal protein uS4 family. As to quaternary structure, part of the 30S ribosomal subunit. Contacts protein S5. The interaction surface between S4 and S5 is involved in control of translational fidelity.

One of the primary rRNA binding proteins, it binds directly to 16S rRNA where it nucleates assembly of the body of the 30S subunit. Its function is as follows. With S5 and S12 plays an important role in translational accuracy. In Picrophilus torridus (strain ATCC 700027 / DSM 9790 / JCM 10055 / NBRC 100828 / KAW 2/3), this protein is Small ribosomal subunit protein uS4.